Here is a 123-residue protein sequence, read N- to C-terminus: Large ribosomal subunit protein bL12 (123 aa).

The protein belongs to the bacterial ribosomal protein bL12 family. As to quaternary structure, homodimer. Part of the ribosomal stalk of the 50S ribosomal subunit. Forms a multimeric L10(L12)X complex, where L10 forms an elongated spine to which 2 to 4 L12 dimers bind in a sequential fashion. Binds GTP-bound translation factors.

Forms part of the ribosomal stalk which helps the ribosome interact with GTP-bound translation factors. Is thus essential for accurate translation. The sequence is that of Large ribosomal subunit protein bL12 from Borrelia turicatae (strain 91E135).